A 253-amino-acid chain; its full sequence is Imidazole glycerol phosphate synthase subunit HisF (253 aa).

Catalysis depends on residues D11 and D130.

Belongs to the HisA/HisF family. Heterodimer of HisH and HisF.

It is found in the cytoplasm. The enzyme catalyses 5-[(5-phospho-1-deoxy-D-ribulos-1-ylimino)methylamino]-1-(5-phospho-beta-D-ribosyl)imidazole-4-carboxamide + L-glutamine = D-erythro-1-(imidazol-4-yl)glycerol 3-phosphate + 5-amino-1-(5-phospho-beta-D-ribosyl)imidazole-4-carboxamide + L-glutamate + H(+). It functions in the pathway amino-acid biosynthesis; L-histidine biosynthesis; L-histidine from 5-phospho-alpha-D-ribose 1-diphosphate: step 5/9. Functionally, IGPS catalyzes the conversion of PRFAR and glutamine to IGP, AICAR and glutamate. The HisF subunit catalyzes the cyclization activity that produces IGP and AICAR from PRFAR using the ammonia provided by the HisH subunit. This is Imidazole glycerol phosphate synthase subunit HisF from Lysinibacillus sphaericus (strain C3-41).